Here is a 103-residue protein sequence, read N- to C-terminus: MELIEQVSVAKKANIYFEGKVASRSVFFNDGSKQTLGVVLPGEYEFSTSQGEIMQVTSGSFEVLLPDSTTWQTFSEGSQFELVANASFKIRNSAIAEYCCSYL.

The protein belongs to the nucleoside phosphorylase PpnP family.

It carries out the reaction a purine D-ribonucleoside + phosphate = a purine nucleobase + alpha-D-ribose 1-phosphate. The enzyme catalyses adenosine + phosphate = alpha-D-ribose 1-phosphate + adenine. The catalysed reaction is cytidine + phosphate = cytosine + alpha-D-ribose 1-phosphate. It catalyses the reaction guanosine + phosphate = alpha-D-ribose 1-phosphate + guanine. It carries out the reaction inosine + phosphate = alpha-D-ribose 1-phosphate + hypoxanthine. The enzyme catalyses thymidine + phosphate = 2-deoxy-alpha-D-ribose 1-phosphate + thymine. The catalysed reaction is uridine + phosphate = alpha-D-ribose 1-phosphate + uracil. It catalyses the reaction xanthosine + phosphate = alpha-D-ribose 1-phosphate + xanthine. Catalyzes the phosphorolysis of diverse nucleosides, yielding D-ribose 1-phosphate and the respective free bases. Can use uridine, adenosine, guanosine, cytidine, thymidine, inosine and xanthosine as substrates. Also catalyzes the reverse reactions. The sequence is that of Pyrimidine/purine nucleoside phosphorylase from Shewanella sp. (strain MR-4).